Here is a 384-residue protein sequence, read N- to C-terminus: Tryptophan--tRNA ligase (384 aa).

Residues 81–89 (PSGPMHIGH) carry the 'HIGH' region motif. A 'KMSKS' region motif is present at residues 252–256 (KMSAS).

This sequence belongs to the class-I aminoacyl-tRNA synthetase family.

Its subcellular location is the cytoplasm. The catalysed reaction is tRNA(Trp) + L-tryptophan + ATP = L-tryptophyl-tRNA(Trp) + AMP + diphosphate + H(+). The chain is Tryptophan--tRNA ligase from Thermococcus sibiricus (strain DSM 12597 / MM 739).